The sequence spans 260 residues: Dehydrogenase/reductase SDR family member 4 (260 aa).

Residue Ile14–Val38 coordinates NADP(+). Ser148 contacts substrate. The active-site Proton acceptor is Tyr161. Lys165 serves as a coordination point for NADP(+).

This sequence belongs to the short-chain dehydrogenases/reductases (SDR) family.

The catalysed reaction is a secondary alcohol + NADP(+) = a ketone + NADPH + H(+). Its function is as follows. Catalyzes the reduction of isatin, 4-oxonon-2-enal, 9,10-phenanthrenequinone, menadione, 2,3-hexaenadione, 3,4-hexanedione and 2,3-heptanedione. The chain is Dehydrogenase/reductase SDR family member 4 from Caenorhabditis elegans.